A 243-amino-acid polypeptide reads, in one-letter code: Transcription factor A, mitochondrial (243 aa).

The N-terminal 42 residues, 1-42 (MALFRGMWSVLKALGRTGVEMCAGCGGRIPSSISLVCIPKCF), are a transit peptide targeting the mitochondrion. Residues 49 to 117 (PKKPMSSYLR…AYKEAVSKYK (69 aa)) constitute a DNA-binding region (HMG box 1). 3 positions are modified to phosphoserine; by PKA: serine 54, serine 55, and serine 60. N6-succinyllysine is present on lysine 66. A Phosphothreonine modification is found at threonine 121. A DNA-binding region (HMG box 2) is located at residues 154–218 (PKRPRSAYNI…RYDNEMKSWE (65 aa)). Serine 159 is modified (phosphoserine; by PKA). Serine 192 carries the phosphoserine modification.

Monomer; binds DNA as a monomer. Homodimer. Component of the mitochondrial transcription initiation complex, composed at least of TFB2M, TFAM and POLRMT. In this complex TFAM recruits POLRMT to the promoter whereas TFB2M induces structural changes in POLRMT to enable promoter opening and trapping of the DNA non-template strand. Upon metabolic stress, forms a complex composed of FOXO3, SIRT3, TFAM and POLRMT. Interacts with TFB1M and TFB2M. Interacts with CLPX; this enhances DNA-binding. Post-translationally, phosphorylation by PKA within the HMG box 1 impairs DNA binding and promotes degradation by the AAA+ Lon protease. In terms of tissue distribution, the mitochondrial isoform is widely expressed while the nuclear isoform is testis-specific.

The protein localises to the mitochondrion. It is found in the mitochondrion matrix. It localises to the mitochondrion nucleoid. Its subcellular location is the nucleus. Binds to the mitochondrial light strand promoter and functions in mitochondrial transcription regulation. Component of the mitochondrial transcription initiation complex, composed at least of TFB2M, TFAM and POLRMT that is required for basal transcription of mitochondrial DNA. In this complex, TFAM recruits POLRMT to a specific promoter whereas TFB2M induces structural changes in POLRMT to enable promoter opening and trapping of the DNA non-template strand. Required for accurate and efficient promoter recognition by the mitochondrial RNA polymerase. Promotes transcription initiation from the HSP1 and the light strand promoter by binding immediately upstream of transcriptional start sites. Is able to unwind DNA. Bends the mitochondrial light strand promoter DNA into a U-turn shape via its HMG boxes. Required for maintenance of normal levels of mitochondrial DNA. May play a role in organizing and compacting mitochondrial DNA. Functionally, may also function as a transcriptional activator or may have a structural role in the compaction of nuclear DNA during spermatogenesis. This is Transcription factor A, mitochondrial from Mus musculus (Mouse).